The sequence spans 255 residues: Aprataxin and PNK-like factor (255 aa).

The span at 1 to 11 shows a compositional bias: low complexity; that stretch reads MSATDASTADS. 3 disordered regions span residues 1-117, 131-168, and 195-255; these read MSAT…VSSS, RRNP…FGNA, and RLRQ…DDYD. Composition is skewed to basic and acidic residues over residues 12 to 22, 40 to 64, and 137 to 150; these read GAKRKSSEDIT, KSEE…KAEP, and RSAE…DYRR. PBZ-type zinc fingers lie at residues 121 to 142 and 161 to 182; these read TSCR…AEAH and PACP…DYSH. Acidic residues predominate over residues 207-218; it reads DDSGTDEEDEPF. Residues 221–230 show a composition bias toward basic and acidic residues; it reads DNDRDADYRP. A compositionally biased stretch (acidic residues) spans 234–244; that stretch reads INEDEDDELEF.

The protein belongs to the APLF family.

Displays apurinic-apyrimidinic (AP) endonuclease and 3'-5' exonuclease activities in vitro. This chain is Aprataxin and PNK-like factor, found in Drosophila melanogaster (Fruit fly).